The sequence spans 421 residues: MTKSIQAIRGMSDTLPEEIPYWSFLENACRSVVSAYHYREIRFPVVEQTALFKRTIGEATDIVEKEMYTFTDRNGDSLTLRPEGTAGCVRAGIQNGLFYNQIQRLWYLGPMFRHERPQKGRYRQFYQLGVETYGMAGAPIEAELIFMCLRLWKALGLESCIHLELNTLGTLDSRNAYRQALVTYLQSREKELDEDSRRRLHTNPLRILDSKNPDLQPLLAEAPKLIDYLDETSRRHFDQLRSLLDQAEVPFIVNPTLVRGLDYYTHTVFEWVTDQLGAQGTVCAGGRYDNLVELLGGKSTPAAGFAAGLERLVLLLRGVQECLDKIDIYVVIAGEAVIQEGLLMTEQLRNVLPEWVIEADLSGSSLKSQFKRADKSGAKWALVIGEEEIKTNTVTLKHLRETVPQKSLTRDTLIPYLKSEG.

Belongs to the class-II aminoacyl-tRNA synthetase family. Homodimer.

Its subcellular location is the cytoplasm. The catalysed reaction is tRNA(His) + L-histidine + ATP = L-histidyl-tRNA(His) + AMP + diphosphate + H(+). The chain is Histidine--tRNA ligase from Coxiella burnetii (strain Dugway 5J108-111).